The primary structure comprises 219 residues: Cytidylate kinase (219 aa).

An ATP-binding site is contributed by Gly-21–Thr-29.

This sequence belongs to the cytidylate kinase family. Type 1 subfamily.

The protein resides in the cytoplasm. It carries out the reaction CMP + ATP = CDP + ADP. The catalysed reaction is dCMP + ATP = dCDP + ADP. The protein is Cytidylate kinase of Rickettsia felis (strain ATCC VR-1525 / URRWXCal2) (Rickettsia azadi).